Reading from the N-terminus, the 690-residue chain is Protein-glutamine gamma-glutamyltransferase 2 (690 aa).

A2 is modified (N-acetylalanine). 2 disulfide bridges follow: C230–C370 and C370–C371. Active-site residues include C277, H335, and D358. 5 residues coordinate Ca(2+): N398, D400, E436, E446, and E451. K467 bears the N6-acetyllysine mark. GTP is bound at residue R479–M486. Position 542 (E542) interacts with Ca(2+). R583–Y586 lines the GTP pocket. Residue Q636 forms an Isoglutamyl lysine isopeptide (Gln-Lys) (interchain with K-?) linkage.

This sequence belongs to the transglutaminase superfamily. Transglutaminase family. Monomer. Interacts with phospholipase C; promoting alpha-1 adrenergic receptor signaling. Interacts with PLCD1. Requires Ca(2+) as cofactor. In terms of processing, disulfide bond formation inactivates the calcium-dependent acyltransferase activity. Cys-370 can form disulfide bonds with both Cys-230 and Cys-371: formation of a disulfide bond between Cys-230 and Cys-370 facilitates formation of the disulfide between Cys-370 and Cys-371, which promotes inactivation of the acyltransferase activity. May also form interchain disulfids between Cys-230 and Cys-370. Ca(2+) protects against disulfide bond formation and inactivation. Auto-transglutaminated: Forms covalent cross-links mediated by transglutaminase between Gln-636 and the epsilon-amino group of a lysine residue of itself or HMGB1, forming homopolymers and heteropolymers, respectively. Post-translationally, S-nitrosylated, leading to inactivation of the acyltransferase activity.

It is found in the cytoplasm. The protein localises to the cytosol. It localises to the nucleus. Its subcellular location is the chromosome. The protein resides in the secreted. It is found in the extracellular space. The protein localises to the extracellular matrix. It localises to the cell membrane. Its subcellular location is the mitochondrion. The catalysed reaction is L-glutaminyl-[protein] + L-lysyl-[protein] = [protein]-L-lysyl-N(6)-5-L-glutamyl-[protein] + NH4(+). The enzyme catalyses L-glutaminyl-[protein] + serotonin = 5-serotonyl-L-glutamyl-[protein] + NH4(+). It carries out the reaction L-glutaminyl-[protein] + dopamine = 5-dopaminyl-L-glutamyl-[protein] + NH4(+). It catalyses the reaction L-glutaminyl-[protein] + histamine = 5-histaminyl-L-glutamyl-[protein] + NH4(+). The catalysed reaction is L-glutaminyl-[protein] + (R)-noradrenaline = 5-(R)-noradrenalinyl-L-glutamyl-[protein] + NH4(+). The enzyme catalyses L-glutaminyl-[protein] + H2O = L-glutamyl-[protein] + NH4(+). Its activity is regulated as follows. Acyltransferase activity is regulated by the binding of GTP and Ca(2+): inactivated by GTP, which stabilizes its closed structure, thereby obstructing the accessibility of substrates to the active sites. In contrast, Ca(2+) acts as a cofactor by inducing conformational change to the active open form. In absence of Ca(2+), Mg(2+) may bind Ca(2+)-binding sites, promoting GTP-binding and subsequent inhibition of the acyltransferase activity. Extracellularly reduced and activated by CLIC3. Calcium-dependent acyltransferase that catalyzes the formation of covalent bonds between peptide-bound glutamine and various primary amines, such as gamma-amino group of peptide-bound lysine, or mono- and polyamines, thereby producing cross-linked or aminated proteins, respectively. Involved in many biological processes, such as bone development, angiogenesis, wound healing, cellular differentiation, chromatin modification and apoptosis. Acts as a protein-glutamine gamma-glutamyltransferase by mediating the cross-linking of proteins, such as ACO2, HSPB6, FN1, HMGB1, RAP1GDS1, SLC25A4/ANT1, SPP1 and WDR54. Under physiological conditions, the protein cross-linking activity is inhibited by GTP; inhibition is relieved by Ca(2+) in response to various stresses. When secreted, catalyzes cross-linking of proteins of the extracellular matrix, such as FN1 and SPP1 resulting in the formation of scaffolds. Plays a key role during apoptosis, both by (1) promoting the cross-linking of cytoskeletal proteins resulting in condensation of the cytoplasm, and by (2) mediating cross-linking proteins of the extracellular matrix, resulting in the irreversible formation of scaffolds that stabilize the integrity of the dying cells before their clearance by phagocytosis, thereby preventing the leakage of harmful intracellular components. In addition to protein cross-linking, can use different monoamine substrates to catalyze a vast array of protein post-translational modifications: mediates aminylation of serotonin, dopamine, noradrenaline or histamine into glutamine residues of target proteins to generate protein serotonylation, dopaminylation, noradrenalinylation or histaminylation, respectively. Mediates protein serotonylation of small GTPases during activation and aggregation of platelets, leading to constitutive activation of these GTPases. Plays a key role in chromatin organization by mediating serotonylation and dopaminylation of histone H3. Catalyzes serotonylation of 'Gln-5' of histone H3 (H3Q5ser) during serotonergic neuron differentiation, thereby facilitating transcription. Acts as a mediator of neurotransmission-independent role of nuclear dopamine in ventral tegmental area (VTA) neurons: catalyzes dopaminylation of 'Gln-5' of histone H3 (H3Q5dop), thereby regulating relapse-related transcriptional plasticity in the reward system. Regulates vein remodeling by mediating serotonylation and subsequent inactivation of ATP2A2/SERCA2. Also acts as a protein deamidase by mediating the side chain deamidation of specific glutamine residues of proteins to glutamate. Catalyzes specific deamidation of protein gliadin, a component of wheat gluten in the diet. May also act as an isopeptidase cleaving the previously formed cross-links. Also able to participate in signaling pathways independently of its acyltransferase activity: acts as a signal transducer in alpha-1 adrenergic receptor-mediated stimulation of phospholipase C-delta (PLCD) activity and is required for coupling alpha-1 adrenergic agonists to the stimulation of phosphoinositide lipid metabolism. In Cavia cutleri (Guinea pig), this protein is Protein-glutamine gamma-glutamyltransferase 2.